The primary structure comprises 214 residues: Nucleoside triphosphate pyrophosphatase (214 aa).

Asp79 acts as the Proton acceptor in catalysis.

Belongs to the Maf family. It depends on a divalent metal cation as a cofactor.

Its subcellular location is the cytoplasm. It carries out the reaction a ribonucleoside 5'-triphosphate + H2O = a ribonucleoside 5'-phosphate + diphosphate + H(+). The enzyme catalyses a 2'-deoxyribonucleoside 5'-triphosphate + H2O = a 2'-deoxyribonucleoside 5'-phosphate + diphosphate + H(+). In terms of biological role, nucleoside triphosphate pyrophosphatase. May have a dual role in cell division arrest and in preventing the incorporation of modified nucleotides into cellular nucleic acids. The protein is Nucleoside triphosphate pyrophosphatase of Rhodococcus jostii (strain RHA1).